A 440-amino-acid polypeptide reads, in one-letter code: Thymidine phosphorylase (440 aa).

The protein belongs to the thymidine/pyrimidine-nucleoside phosphorylase family. Homodimer.

It carries out the reaction thymidine + phosphate = 2-deoxy-alpha-D-ribose 1-phosphate + thymine. The protein operates within pyrimidine metabolism; dTMP biosynthesis via salvage pathway; dTMP from thymine: step 1/2. The enzymes which catalyze the reversible phosphorolysis of pyrimidine nucleosides are involved in the degradation of these compounds and in their utilization as carbon and energy sources, or in the rescue of pyrimidine bases for nucleotide synthesis. The chain is Thymidine phosphorylase from Escherichia coli O139:H28 (strain E24377A / ETEC).